Consider the following 294-residue polypeptide: ATP synthase gamma chain (294 aa).

Belongs to the ATPase gamma chain family. As to quaternary structure, F-type ATPases have 2 components, CF(1) - the catalytic core - and CF(0) - the membrane proton channel. CF(1) has five subunits: alpha(3), beta(3), gamma(1), delta(1), epsilon(1). CF(0) has three main subunits: a, b and c.

It is found in the cell inner membrane. Its function is as follows. Produces ATP from ADP in the presence of a proton gradient across the membrane. The gamma chain is believed to be important in regulating ATPase activity and the flow of protons through the CF(0) complex. The chain is ATP synthase gamma chain from Paraburkholderia xenovorans (strain LB400).